A 469-amino-acid polypeptide reads, in one-letter code: Ribulose bisphosphate carboxylase large chain (469 aa).

Lys-5 bears the N6,N6,N6-trimethyllysine mark. Residues Asn-114 and Thr-164 each contribute to the substrate site. Lys-166 (proton acceptor) is an active-site residue. Lys-168 is a binding site for substrate. Mg(2+) is bound by residues Lys-192, Asp-194, and Glu-195. At Lys-192 the chain carries N6-carboxylysine. Residue His-285 is the Proton acceptor of the active site. Substrate-binding residues include Arg-286, His-318, and Ser-370.

Belongs to the RuBisCO large chain family. Type I subfamily. As to quaternary structure, heterohexadecamer of 8 large chains and 8 small chains; disulfide-linked. The disulfide link is formed within the large subunit homodimers. Mg(2+) is required as a cofactor. Post-translationally, the disulfide bond which can form in the large chain dimeric partners within the hexadecamer appears to be associated with oxidative stress and protein turnover.

It is found in the plastid. Its subcellular location is the chloroplast. It catalyses the reaction 2 (2R)-3-phosphoglycerate + 2 H(+) = D-ribulose 1,5-bisphosphate + CO2 + H2O. It carries out the reaction D-ribulose 1,5-bisphosphate + O2 = 2-phosphoglycolate + (2R)-3-phosphoglycerate + 2 H(+). Functionally, ruBisCO catalyzes two reactions: the carboxylation of D-ribulose 1,5-bisphosphate, the primary event in carbon dioxide fixation, as well as the oxidative fragmentation of the pentose substrate in the photorespiration process. Both reactions occur simultaneously and in competition at the same active site. In Calycophyllum candidissimum (Degame lemonwood tree), this protein is Ribulose bisphosphate carboxylase large chain.